Consider the following 127-residue polypeptide: Putative 2Fe-2S ferredoxin (127 aa).

Residues cysteine 23, cysteine 54, and cysteine 58 each coordinate [2Fe-2S] cluster.

The protein belongs to the 2Fe2S Shethna-type ferredoxin family. Requires [2Fe-2S] cluster as cofactor.

Functionally, ferredoxins are iron-sulfur proteins that transfer electrons in a wide variety of metabolic reactions. The polypeptide is Putative 2Fe-2S ferredoxin (cbiW) (Priestia megaterium (Bacillus megaterium)).